The sequence spans 718 residues: Protein Smaug homolog 1 (718 aa).

Ser-168 is subject to Phosphoserine. 3 disordered regions span residues 278 to 323 (ARGP…EEGS), 416 to 474 (KAYS…LQPH), and 572 to 601 (NRGF…QYQI). One can recognise an SAM domain in the interval 323–391 (SGMKDVPAWL…ERQNLLKSLE (69 aa)). Ser-420 carries the phosphoserine modification. At Thr-424 the chain carries Phosphothreonine. Residues 453–466 (GAAATGATATPSAG) are compositionally biased toward low complexity. The residue at position 573 (Arg-573) is an Omega-N-methylarginine. Ser-580 carries the phosphoserine modification.

Belongs to the SMAUG family.

Its subcellular location is the cytoplasm. The protein resides in the cell projection. The protein localises to the dendrite. It is found in the synapse. It localises to the synaptosome. Its function is as follows. Acts as a translational repressor of SRE-containing messengers. In Homo sapiens (Human), this protein is Protein Smaug homolog 1 (SAMD4A).